The primary structure comprises 156 residues: Arginine repressor (156 aa).

This sequence belongs to the ArgR family.

The protein localises to the cytoplasm. The protein operates within amino-acid biosynthesis; L-arginine biosynthesis [regulation]. Functionally, regulates arginine biosynthesis genes. The polypeptide is Arginine repressor (Shewanella sp. (strain ANA-3)).